The sequence spans 179 residues: TM2 domain-containing protein Y66D12A.21 (179 aa).

The signal sequence occupies residues 1 to 18 (MRQLLLTLSLISVSASDA). Residues 19–82 (TVKCDDLDPN…IFNRTVPSAC (64 aa)) lie on the Extracellular side of the membrane. N-linked (GlcNAc...) asparagine glycosylation is present at asparagine 75. A helical transmembrane segment spans residues 83 to 105 (HYGAHVSYTTTVLLSIFLGFFGI). The TM2 domain occupies 88–135 (VSYTTTVLLSIFLGFFGIDRIYLGYYALGLIKMFSLGGLFVFWLVDII). The Cytoplasmic portion of the chain corresponds to 106 to 109 (DRIY). The chain crosses the membrane as a helical span at residues 110-132 (LGYYALGLIKMFSLGGLFVFWLV). The Extracellular portion of the chain corresponds to 133 to 179 (DIILISLQLLGPADGTAYAMAYYGPKAQMIRFDSHTNFSFYTCDGCL). Asparagine 169 carries an N-linked (GlcNAc...) asparagine glycan.

This sequence belongs to the TM2 family.

It is found in the membrane. In Caenorhabditis elegans, this protein is TM2 domain-containing protein Y66D12A.21.